We begin with the raw amino-acid sequence, 331 residues long: MRCVVFNLREEEAPYVEKWKQSHPGVVVDTYEEPLTAKNKELLKGYEGLVVMQFLAMEDEVYDYMGACKLKVLSTRTAGFDMYNATLLKKHGIRLTNVPSYSPNAIGEYALAAALQLTRHAREIETFVRKRDFRWQKPILSKELRCSRVGILGTGRIGQAAARLFKGVGAQVVGFDPYPNDAAKEWLTYVSMDELLSTSDVISLHMPATKDSHHLINAKTIAQMKDGVYLVNTARGAVIDSQALLDSLDKGKIAGAALDAYEFEGPYIPKDNGNNPITDTVYARLVAHERIIYTPHIAFYTETAIENMVFNSLDACTTVLRGEPCAAEIKL.

NAD(+) is bound by residues 156–157 (RI), Asp-176, 206–207 (MP), 233–235 (TAR), and Asp-259. Arg-235 is an active-site residue. The active site involves Glu-264. Residue His-296 is the Proton donor of the active site.

It belongs to the D-isomer specific 2-hydroxyacid dehydrogenase family.

The enzyme catalyses (R)-lactate + NAD(+) = pyruvate + NADH + H(+). The chain is D-lactate dehydrogenase (ldhD) from Treponema pallidum (strain Nichols).